The primary structure comprises 100 residues: Nucleoid-associated protein Caur_0522 (100 aa).

This sequence belongs to the YbaB/EbfC family. As to quaternary structure, homodimer.

The protein resides in the cytoplasm. It is found in the nucleoid. In terms of biological role, binds to DNA and alters its conformation. May be involved in regulation of gene expression, nucleoid organization and DNA protection. The polypeptide is Nucleoid-associated protein Caur_0522 (Chloroflexus aurantiacus (strain ATCC 29366 / DSM 635 / J-10-fl)).